Consider the following 286-residue polypeptide: MRDSRETFVNHAFVTGYPIKHSRSPLIHGYWLKQFGIAGSYRAHEVTPEAFPEFMGQLRDGGTGFCGGNVTIPHKEMAFELSDRPDELSAELGAANTLWLEDGRICATNTDGRGFVANLDERASGWDRISTAVILGAGGASRAVIQAVRDRGVKTIHVVNRTAARAQELADRFGRAVHAHPIAALSEVMAGAGLFVNTTSLGMDGEPAPAIDFSPLANGAVVTDIVYVPLKTPLLRQAEEQGYRIVDGLGMLLHQAAPGFEKWFGLRPVVDETLRQIIIKDMDVHA.

Shikimate-binding positions include 22 to 24 and Thr-71; that span reads SRS. The active-site Proton acceptor is the Lys-75. Glu-87 contributes to the NADP(+) binding site. Residues Asn-96 and Asp-111 each contribute to the shikimate site. NADP(+)-binding positions include 136-140, 160-165, and Ile-225; these read GAGGA and NRTAAR. Tyr-227 lines the shikimate pocket. Gly-248 contacts NADP(+).

This sequence belongs to the shikimate dehydrogenase family. In terms of assembly, homodimer.

It catalyses the reaction shikimate + NADP(+) = 3-dehydroshikimate + NADPH + H(+). It functions in the pathway metabolic intermediate biosynthesis; chorismate biosynthesis; chorismate from D-erythrose 4-phosphate and phosphoenolpyruvate: step 4/7. Its function is as follows. Involved in the biosynthesis of the chorismate, which leads to the biosynthesis of aromatic amino acids. Catalyzes the reversible NADPH linked reduction of 3-dehydroshikimate (DHSA) to yield shikimate (SA). This chain is Shikimate dehydrogenase (NADP(+)), found in Sinorhizobium fredii (strain NBRC 101917 / NGR234).